The primary structure comprises 291 residues: Exosome complex component RRP42 (291 aa).

Ala2 is modified (N-acetylalanine). Position 116 is an N6-acetyllysine (Lys116). A Phosphoserine modification is found at Ser177.

This sequence belongs to the RNase PH family. As to quaternary structure, component of the RNA exosome core complex (Exo-9), composed of EXOSC1, EXOSC2, EXOSC3, EXOSC4, EXOSC5, EXOSC6, EXOSC7, EXOSC8 and EXOSC9; within the complex interacts with EXOSC2 and EXOSC4. The catalytically inactive RNA exosome core complex (Exo-9) associates with the catalytic subunit EXOSC10/RRP6. Exo-9 may associate with DIS3 to form the nucleolar exosome complex, or DIS3L to form the cytoplasmic exosome complex. Exo-9 is formed by a hexameric base ring consisting of the heterodimers EXOSC4-EXOSC9, EXOSC5-EXOSC8 and EXOSC6-EXOSC7, and a cap ring consisting of EXOSC1, EXOSC2 and EXOSC3. The RNA exosome complex associates with cofactors C1D/RRP47, MPHOSPH6/MPP6 and MTREX/MTR4. Interacts with ZC3HAV1. Interacts with DIS3; the interaction is direct.

The protein resides in the nucleus. The protein localises to the nucleolus. It localises to the cytoplasm. In terms of biological role, non-catalytic component of the RNA exosome complex which has 3'-&gt;5' exoribonuclease activity and participates in a multitude of cellular RNA processing and degradation events. In the nucleus, the RNA exosome complex is involved in proper maturation of stable RNA species such as rRNA, snRNA and snoRNA, in the elimination of RNA processing by-products and non-coding 'pervasive' transcripts, such as antisense RNA species and promoter-upstream transcripts (PROMPTs), and of mRNAs with processing defects, thereby limiting or excluding their export to the cytoplasm. The RNA exosome may be involved in Ig class switch recombination (CSR) and/or Ig variable region somatic hypermutation (SHM) by targeting AICDA deamination activity to transcribed dsDNA substrates. In the cytoplasm, the RNA exosome complex is involved in general mRNA turnover and specifically degrades inherently unstable mRNAs containing AU-rich elements (AREs) within their 3' untranslated regions, and in RNA surveillance pathways, preventing translation of aberrant mRNAs. It seems to be involved in degradation of histone mRNA. The catalytic inactive RNA exosome core complex of 9 subunits (Exo-9) is proposed to play a pivotal role in the binding and presentation of RNA for ribonucleolysis, and to serve as a scaffold for the association with catalytic subunits and accessory proteins or complexes. This is Exosome complex component RRP42 (EXOSC7) from Homo sapiens (Human).